Reading from the N-terminus, the 164-residue chain is Two-component response regulator ARR16 (164 aa).

In terms of domain architecture, Response regulatory spans 30–160 (HVLAVDDNLI…DVEKLKCHLM (131 aa)). A 4-aspartylphosphate modification is found at Asp93.

The protein belongs to the ARR family. Type-A subfamily. Two-component system major event consists of a His-to-Asp phosphorelay between a sensor histidine kinase (HK) and a response regulator (RR). In plants, the His-to-Asp phosphorelay involves an additional intermediate named Histidine-containing phosphotransfer protein (HPt). This multistep phosphorelay consists of a His-Asp-His-Asp sequential transfer of a phosphate group between first a His and an Asp of the HK protein, followed by the transfer to a conserved His of the HPt protein and finally the transfer to an Asp in the receiver domain of the RR protein.

The protein resides in the nucleus. Its function is as follows. Functions as a response regulator involved in His-to-Asp phosphorelay signal transduction system. Phosphorylation of the Asp residue in the receiver domain activates the ability of the protein to promote the transcription of target genes. Type-A response regulators seem to act as negative regulators of the cytokinin signaling. The chain is Two-component response regulator ARR16 (ARR16) from Arabidopsis thaliana (Mouse-ear cress).